Consider the following 122-residue polypeptide: Large ribosomal subunit protein uL14 (122 aa).

The protein belongs to the universal ribosomal protein uL14 family. In terms of assembly, part of the 50S ribosomal subunit. Forms a cluster with proteins L3 and L19. In the 70S ribosome, L14 and L19 interact and together make contacts with the 16S rRNA in bridges B5 and B8.

Its function is as follows. Binds to 23S rRNA. Forms part of two intersubunit bridges in the 70S ribosome. The sequence is that of Large ribosomal subunit protein uL14 from Protochlamydia amoebophila (strain UWE25).